Here is a 318-residue protein sequence, read N- to C-terminus: Methionyl-tRNA formyltransferase (318 aa).

114–117 (SLLP) provides a ligand contact to (6S)-5,6,7,8-tetrahydrofolate.

It belongs to the Fmt family.

The catalysed reaction is L-methionyl-tRNA(fMet) + (6R)-10-formyltetrahydrofolate = N-formyl-L-methionyl-tRNA(fMet) + (6S)-5,6,7,8-tetrahydrofolate + H(+). Attaches a formyl group to the free amino group of methionyl-tRNA(fMet). The formyl group appears to play a dual role in the initiator identity of N-formylmethionyl-tRNA by promoting its recognition by IF2 and preventing the misappropriation of this tRNA by the elongation apparatus. The sequence is that of Methionyl-tRNA formyltransferase from Protochlamydia amoebophila (strain UWE25).